Reading from the N-terminus, the 120-residue chain is MSVSKDQILDAIAEMSVMDVVALIEAMEEKFGVTAAAGMVAGPAAEAVEEKTEFDVILTGAGANKVSAIKAVRSATGLGLKEAKALVEAAPTPVKEGISKEEAEALAKDLTEAGAEVEVK.

It belongs to the bacterial ribosomal protein bL12 family. As to quaternary structure, homodimer. Part of the ribosomal stalk of the 50S ribosomal subunit. Forms a multimeric L10(L12)X complex, where L10 forms an elongated spine to which 2 to 4 L12 dimers bind in a sequential fashion. Binds GTP-bound translation factors.

Its function is as follows. Forms part of the ribosomal stalk which helps the ribosome interact with GTP-bound translation factors. Is thus essential for accurate translation. The protein is Large ribosomal subunit protein bL12 of Pseudoalteromonas translucida (strain TAC 125).